A 198-amino-acid polypeptide reads, in one-letter code: Copy number protein (198 aa).

The protein resides in the cell membrane. Its function is as follows. Involved in copy number control of pIP404. This basic and hydrophobic protein may exert its effect from the cytoplasmic membrane. The protein is Copy number protein (cop) of Clostridium perfringens.